The sequence spans 423 residues: Alpha-1-antichymotrypsin (423 aa).

Positions 1–23 (MERMLPFLALGLLVAGFCPAVLC) are cleaved as a signal peptide. Asn-93, Asn-106, Asn-127, Asn-186, and Asn-271 each carry an N-linked (GlcNAc...) asparagine glycan. The segment at 369 to 394 (GTEASAATAVKITLLSALVDPMTIVR) is RCL.

It belongs to the serpin family. In terms of assembly, interacts with DNAJC1. Plasma.

The protein localises to the secreted. Its function is as follows. Although its physiological function is unclear, it can inhibit neutrophil cathepsin G and mast cell chymase, both of which can convert angiotensin-1 to the active angiotensin-2. The polypeptide is Alpha-1-antichymotrypsin (SERPINA3) (Pongo abelii (Sumatran orangutan)).